The chain runs to 432 residues: Leucine-rich repeat-containing protein ODA7 (432 aa).

5 LRR repeats span residues 47–68 (NLKALFLEGNVLETLEGLPPLA), 69–90 (DLKCLYVQQNCIWKISGLEAVP), 91–112 (GLDTLNISNNQLTKLEGLACCP), 113–134 (ALRTLIATHNHLVTLDSVAHLA), and 138–159 (ALQTLDLQNNELEDPGIVDILK). The LRRCT domain maps to 173-211 (PVVSNIKNYRKVLVTSIPSLTYLDDRPVFDNERKIAQAW). Residues 212 to 243 (LEGGLEGERAMRNQLKEEEEERSRKNHEFMMQ) are a coiled coil. Disordered regions lie at residues 297–332 (RPGEEEPAELASARQGLARDGKPIQEGAWGSGAAAE) and 368–432 (EELD…NDLD). 2 stretches are compositionally biased toward low complexity: residues 323 to 332 (GAWGSGAAAE) and 407 to 425 (VAAAKKGAASGAAEGISAA).

The protein belongs to the DNAAF1 family. As to quaternary structure, interacts with both outer row and I1 inner row dyneins.

The protein resides in the cytoplasm. It localises to the cytoskeleton. The protein localises to the cilium axoneme. In terms of biological role, cilium-specific protein required for cilia structures. Axonemal dynein-associated protein that participates in a structural link between inner and outer row dyneins. The chain is Leucine-rich repeat-containing protein ODA7 (ODA7) from Chlamydomonas reinhardtii (Chlamydomonas smithii).